Reading from the N-terminus, the 540-residue chain is Thiamine biosynthetic bifunctional enzyme (540 aa).

Positions 1–238 (MVFTKEEVDY…LDATRYQFVE (238 aa)) are thiamine-phosphate synthase. 4-amino-2-methyl-5-(diphosphooxymethyl)pyrimidine contacts are provided by residues 43–47 (QIREK) and N75. Residues D76 and D95 each contribute to the Mg(2+) site. S114 contributes to the 4-amino-2-methyl-5-(diphosphooxymethyl)pyrimidine binding site. 143-145 (TST) is a 2-[(2R,5Z)-2-carboxy-4-methylthiazol-5(2H)-ylidene]ethyl phosphate binding site. 4-amino-2-methyl-5-(diphosphooxymethyl)pyrimidine is bound at residue K146. 2-[(2R,5Z)-2-carboxy-4-methylthiazol-5(2H)-ylidene]ethyl phosphate-binding positions include G181 and 209 to 210 (VS). The hydroxyethylthiazole kinase stretch occupies residues 239-540 (CELNNTFPTT…KWSASLKKFK (302 aa)). 5-(2-hydroxyethyl)-4-methylthiazole is bound at residue M290. ATP contacts are provided by K365 and T415. A462 serves as a coordination point for 5-(2-hydroxyethyl)-4-methylthiazole. Residue C465 is the Proton acceptor; for hydroxyethylthiazole kinase activity of the active site.

In the N-terminal section; belongs to the thiamine-phosphate synthase family. It in the C-terminal section; belongs to the Thz kinase family. As to quaternary structure, homooctamer. The cofactor is Mg(2+).

The enzyme catalyses 2-[(2R,5Z)-2-carboxy-4-methylthiazol-5(2H)-ylidene]ethyl phosphate + 4-amino-2-methyl-5-(diphosphooxymethyl)pyrimidine + 2 H(+) = thiamine phosphate + CO2 + diphosphate. It carries out the reaction 2-(2-carboxy-4-methylthiazol-5-yl)ethyl phosphate + 4-amino-2-methyl-5-(diphosphooxymethyl)pyrimidine + 2 H(+) = thiamine phosphate + CO2 + diphosphate. The catalysed reaction is 4-methyl-5-(2-phosphooxyethyl)-thiazole + 4-amino-2-methyl-5-(diphosphooxymethyl)pyrimidine + H(+) = thiamine phosphate + diphosphate. It catalyses the reaction 5-(2-hydroxyethyl)-4-methylthiazole + ATP = 4-methyl-5-(2-phosphooxyethyl)-thiazole + ADP + H(+). The protein operates within cofactor biosynthesis; thiamine diphosphate biosynthesis; 4-methyl-5-(2-phosphoethyl)-thiazole from 5-(2-hydroxyethyl)-4-methylthiazole: step 1/1. Its pathway is cofactor biosynthesis; thiamine diphosphate biosynthesis; thiamine phosphate from 4-amino-2-methyl-5-diphosphomethylpyrimidine and 4-methyl-5-(2-phosphoethyl)-thiazole: step 1/1. Functionally, essential for thiamine biosynthesis. The kinase activity is involved in the salvage synthesis of TH-P from the thiazole. Condenses 4-methyl-5-(beta-hydroxyethyl)thiazole monophosphate (THZ-P) and 2-methyl-4-amino-5-hydroxymethyl pyrimidine pyrophosphate (HMP-PP) to form thiamine monophosphate (TMP). In Saccharomyces cerevisiae (strain ATCC 204508 / S288c) (Baker's yeast), this protein is Thiamine biosynthetic bifunctional enzyme (THI6).